The sequence spans 323 residues: MIEFGDFYRLIAKGPLSPWLDTLPAQLSAWQRESLHGKFKTWFNAVEHLPQLTPTTLDLHSGVRAEMSPPISAGQREGMENMLRALMPWRKGPFSLYGLEIDTEWRSDWKWQRVLPHISPLAGRTILDVGCGSGYHLWRMIGEGAHLAVGIDPMQLFLCQFEAIRKLLGGDQRAHVLPLGIEQLPELAAFDTVFSMGVLYHRRSPLDHLYQLKNQLVTDGELVLETLVVEGDSQQVLVPGDRYAQMRNVYFIPSAPALKAWLEKCGFVDVRIADMAVTTTEEQRRTDWMTSESLAEFLDPHDHSKTVEGYPAPLRAVLIARKP.

Carboxy-S-adenosyl-L-methionine is bound by residues lysine 91, tryptophan 105, lysine 110, glycine 130, 181 to 182 (IE), methionine 196, tyrosine 200, and arginine 315.

Belongs to the class I-like SAM-binding methyltransferase superfamily. CmoB family. As to quaternary structure, homotetramer.

The enzyme catalyses carboxy-S-adenosyl-L-methionine + 5-hydroxyuridine(34) in tRNA = 5-carboxymethoxyuridine(34) in tRNA + S-adenosyl-L-homocysteine + H(+). In terms of biological role, catalyzes carboxymethyl transfer from carboxy-S-adenosyl-L-methionine (Cx-SAM) to 5-hydroxyuridine (ho5U) to form 5-carboxymethoxyuridine (cmo5U) at position 34 in tRNAs. This is tRNA U34 carboxymethyltransferase from Yersinia pseudotuberculosis serotype O:3 (strain YPIII).